A 250-amino-acid chain; its full sequence is 3-deoxy-manno-octulosonate cytidylyltransferase (250 aa).

It belongs to the KdsB family.

It is found in the cytoplasm. The enzyme catalyses 3-deoxy-alpha-D-manno-oct-2-ulosonate + CTP = CMP-3-deoxy-beta-D-manno-octulosonate + diphosphate. Its pathway is nucleotide-sugar biosynthesis; CMP-3-deoxy-D-manno-octulosonate biosynthesis; CMP-3-deoxy-D-manno-octulosonate from 3-deoxy-D-manno-octulosonate and CTP: step 1/1. It participates in bacterial outer membrane biogenesis; lipopolysaccharide biosynthesis. In terms of biological role, activates KDO (a required 8-carbon sugar) for incorporation into bacterial lipopolysaccharide in Gram-negative bacteria. The protein is 3-deoxy-manno-octulosonate cytidylyltransferase of Xanthomonas campestris pv. campestris (strain 8004).